The chain runs to 224 residues: tRNA (guanine-N(7)-)-methyltransferase (224 aa).

Glu57, Asp82, and Asp109 together coordinate S-adenosyl-L-methionine. Asp167 is a binding site for substrate.

The protein belongs to the class I-like SAM-binding methyltransferase superfamily. TrmB family.

It catalyses the reaction guanosine(46) in tRNA + S-adenosyl-L-methionine = N(7)-methylguanosine(46) in tRNA + S-adenosyl-L-homocysteine. Its pathway is tRNA modification; N(7)-methylguanine-tRNA biosynthesis. Its function is as follows. Catalyzes the formation of N(7)-methylguanine at position 46 (m7G46) in tRNA. This is tRNA (guanine-N(7)-)-methyltransferase from Chloroflexus aurantiacus (strain ATCC 29366 / DSM 635 / J-10-fl).